A 295-amino-acid chain; its full sequence is Elongation factor Ts (295 aa).

The involved in Mg(2+) ion dislocation from EF-Tu stretch occupies residues 79–82; sequence TDFV.

The protein belongs to the EF-Ts family.

Its subcellular location is the cytoplasm. Its function is as follows. Associates with the EF-Tu.GDP complex and induces the exchange of GDP to GTP. It remains bound to the aminoacyl-tRNA.EF-Tu.GTP complex up to the GTP hydrolysis stage on the ribosome. This Mycoplasma mycoides subsp. mycoides SC (strain CCUG 32753 / NCTC 10114 / PG1) protein is Elongation factor Ts.